The sequence spans 512 residues: uncharacterized protein (512 aa).

The next 12 helical transmembrane spans lie at 25-45 (GFYT…VICA), 55-75 (LLYP…PLIL), 96-116 (LVVC…VFLA), 123-143 (VVTG…LPAV), 148-168 (LLLT…LVIV), 183-203 (LLWL…FVGP), 238-258 (MTTY…SLRA), 263-283 (GSLH…SMLW), 294-314 (GLLL…MVAE), 329-349 (FLLA…WISV), 359-379 (LICV…VALG), and 386-406 (ATIW…VASL). The disordered stretch occupies residues 428 to 512 (YRPATPNPIH…APLDAGQRIA (85 aa)).

It localises to the cell membrane. This is an uncharacterized protein from Mycobacterium tuberculosis (strain CDC 1551 / Oshkosh).